We begin with the raw amino-acid sequence, 354 residues long: Carbamoyl phosphate synthase arginine-specific small chain (354 aa).

Positions 1–163 (MKAYLHVASG…RTIETYGEGG (163 aa)) are CPSase. Positions 46, 213, and 215 each coordinate L-glutamine. The 188-residue stretch at 165 to 352 (HLVLVDFGYK…LQTVFKGENV (188 aa)) folds into the Glutamine amidotransferase type-1 domain. The active-site Nucleophile is cysteine 240. Leucine 241, glutamine 244, asparagine 282, and tyrosine 285 together coordinate L-glutamine. Residues histidine 325 and glutamate 327 contribute to the active site.

It belongs to the CarA family. Composed of two chains; the small (or glutamine) chain promotes the hydrolysis of glutamine to ammonia, which is used by the large (or ammonia) chain to synthesize carbamoyl phosphate. Tetramer of heterodimers (alpha,beta)4.

It catalyses the reaction hydrogencarbonate + L-glutamine + 2 ATP + H2O = carbamoyl phosphate + L-glutamate + 2 ADP + phosphate + 2 H(+). It carries out the reaction L-glutamine + H2O = L-glutamate + NH4(+). Its pathway is amino-acid biosynthesis; L-arginine biosynthesis; carbamoyl phosphate from bicarbonate: step 1/1. In terms of biological role, small subunit of the glutamine-dependent carbamoyl phosphate synthetase (CPSase). CPSase catalyzes the formation of carbamoyl phosphate from the ammonia moiety of glutamine, carbonate, and phosphate donated by ATP, constituting the first step of the biosynthetic pathway leading to arginine and/or urea. The small subunit (glutamine amidotransferase) binds and cleaves glutamine to supply the large subunit with the substrate ammonia. This is Carbamoyl phosphate synthase arginine-specific small chain from Geobacillus stearothermophilus (Bacillus stearothermophilus).